Here is a 666-residue protein sequence, read N- to C-terminus: uncharacterized protein (666 aa).

One can recognise an RNB domain in the interval 263–553 (RFDLTTLKTY…THFQMKAYLR (291 aa)).

It belongs to the RNR ribonuclease family.

This is an uncharacterized protein from Synechocystis sp. (strain ATCC 27184 / PCC 6803 / Kazusa).